The sequence spans 629 residues: Phosphomethylpyrimidine synthase (629 aa).

Residues 1–20 (MSTTLKNAAHLSESAQVDSG) form a disordered region. Substrate is bound by residues Asn233, Met262, Tyr291, His327, 347 to 349 (SRG), 388 to 391 (DGLR), and Glu427. His431 contacts Zn(2+). Residue Tyr454 participates in substrate binding. His495 serves as a coordination point for Zn(2+). Residues Cys575, Cys578, and Cys583 each contribute to the [4Fe-4S] cluster site.

This sequence belongs to the ThiC family. In terms of assembly, homodimer. [4Fe-4S] cluster is required as a cofactor.

The enzyme catalyses 5-amino-1-(5-phospho-beta-D-ribosyl)imidazole + S-adenosyl-L-methionine = 4-amino-2-methyl-5-(phosphooxymethyl)pyrimidine + CO + 5'-deoxyadenosine + formate + L-methionine + 3 H(+). Its pathway is cofactor biosynthesis; thiamine diphosphate biosynthesis. Functionally, catalyzes the synthesis of the hydroxymethylpyrimidine phosphate (HMP-P) moiety of thiamine from aminoimidazole ribotide (AIR) in a radical S-adenosyl-L-methionine (SAM)-dependent reaction. This is Phosphomethylpyrimidine synthase from Pseudomonas savastanoi pv. phaseolicola (strain 1448A / Race 6) (Pseudomonas syringae pv. phaseolicola (strain 1448A / Race 6)).